Consider the following 313-residue polypeptide: Pyrimidine-specific ribonucleoside hydrolase RihB (313 aa).

D11 acts as the Proton acceptor in catalysis. Residues D11, D16, and V124 each contribute to the Ca(2+) site. Substrate contacts are provided by Q227 and H239. A Ca(2+)-binding site is contributed by D240.

This sequence belongs to the IUNH family. RihB subfamily. In terms of assembly, homotetramer. Ca(2+) is required as a cofactor.

It catalyses the reaction a pyrimidine ribonucleoside + H2O = a pyrimidine nucleobase + D-ribose. Hydrolyzes cytidine or uridine to ribose and cytosine or uracil, respectively. Has a clear preference for cytidine over uridine. Strictly specific for ribonucleosides. The sequence is that of Pyrimidine-specific ribonucleoside hydrolase RihB from Escherichia coli (strain SMS-3-5 / SECEC).